Reading from the N-terminus, the 485-residue chain is NADH-quinone oxidoreductase subunit N (485 aa).

14 consecutive transmembrane segments (helical) span residues 8–28 (LIAL…MLSI), 35–55 (FLNA…LWFV), 75–95 (LYTG…YPWL), 105–125 (FYLL…ANHL), 127–147 (ALFL…GYAF), 159–179 (YTIL…LVYA), 203–223 (LLAG…LVPF), 235–255 (PAPV…GVVM), 271–291 (VVLG…ALSQ), 297–317 (LLGY…IALQ), 326–346 (VGVY…VVSL), 374–394 (AVMT…GFIG), 408–430 (WWLV…RVAV), and 455–475 (IVVL…QPLI).

This sequence belongs to the complex I subunit 2 family. NDH-1 is composed of 13 different subunits. Subunits NuoA, H, J, K, L, M, N constitute the membrane sector of the complex.

The protein localises to the cell inner membrane. The catalysed reaction is a quinone + NADH + 5 H(+)(in) = a quinol + NAD(+) + 4 H(+)(out). In terms of biological role, NDH-1 shuttles electrons from NADH, via FMN and iron-sulfur (Fe-S) centers, to quinones in the respiratory chain. The immediate electron acceptor for the enzyme in this species is believed to be ubiquinone. Couples the redox reaction to proton translocation (for every two electrons transferred, four hydrogen ions are translocated across the cytoplasmic membrane), and thus conserves the redox energy in a proton gradient. This chain is NADH-quinone oxidoreductase subunit N, found in Klebsiella pneumoniae subsp. pneumoniae (strain ATCC 700721 / MGH 78578).